We begin with the raw amino-acid sequence, 324 residues long: Probable non-intrinsic ABC protein 5 (324 aa).

Residues 2-111 enclose the ABC transporter domain; that stretch reads DRERYDKVIE…ADLTLVMKDG (110 aa). 2 helical membrane-spanning segments follow: residues 212 to 232 and 259 to 279; these read YITL…QILF and LSTL…CILV. An ABC transmembrane type-1 domain is found at 222 to 324; that stretch reads VPFILLGQIL…TCSKTCIYSS (103 aa).

This sequence belongs to the ABC transporter superfamily.

It localises to the membrane. This chain is Probable non-intrinsic ABC protein 5 (NAP5), found in Arabidopsis thaliana (Mouse-ear cress).